Consider the following 254-residue polypeptide: Citrate synthase-lysine N-methyltransferase CSKMT, mitochondrial (254 aa).

Residues 1–45 (MLLNRFLVPLRSLQKLTQARRWHQTSLINDLVVNMDKKAMWDRFY) constitute a mitochondrion transit peptide.

It belongs to the methyltransferase superfamily.

The protein resides in the mitochondrion. It catalyses the reaction L-lysyl-[citrate synthase] + S-adenosyl-L-methionine = N(6)-methyl-L-lysyl-[citrate synthase] + S-adenosyl-L-homocysteine + H(+). The enzyme catalyses N(6)-methyl-L-lysyl-[citrate synthase] + S-adenosyl-L-methionine = N(6),N(6)-dimethyl-L-lysyl-[citrate synthase] + S-adenosyl-L-homocysteine + H(+). It carries out the reaction N(6),N(6)-dimethyl-L-lysyl-[citrate synthase] + S-adenosyl-L-methionine = N(6),N(6),N(6)-trimethyl-L-lysyl-[citrate synthase] + S-adenosyl-L-homocysteine + H(+). Its activity is regulated as follows. Citrate synthase-lysine methyltransferase activity is inhibited by S-adenosylhomocysteine (AdoHcy) and oxaloacetate (OAA). In terms of biological role, protein-lysine methyltransferase that selectively trimethylates citrate synthase (CS) in mitochondria. Seems to conduct trimethylation in a highly distributive manner rather than in a processive manner, and thus introduces a single methyl group per binding event. This Danio rerio (Zebrafish) protein is Citrate synthase-lysine N-methyltransferase CSKMT, mitochondrial.